The following is a 372-amino-acid chain: Alginate lyase (372 aa).

Positions 1 to 22 (MKTRLALPCLLGSLLLSSAVHA) are cleaved as a signal peptide. Residues 61-62 (SK), 134-135 (HT), and tyrosine 252 each bind substrate.

Belongs to the polysaccharide lyase 5 family.

The protein resides in the periplasm. The enzyme catalyses Eliminative cleavage of alginate to give oligosaccharides with 4-deoxy-alpha-L-erythro-hex-4-enuronosyl groups at their non-reducing ends and beta-D-mannuronate at their reducing end.. Monovalent cations such as potassium and sodium enhance activity, as well as a combined action of these cations with magnesium. However, other cations like calcium, cobalt, manganese and zinc, or the presence of EDTA, do not affect the enzymatic activity. Its function is as follows. Catalyzes the depolymerization of alginate by cleaving the beta-1,4 glycosidic bond between two adjacent sugar residues via a beta-elimination mechanism. Degrades deacetylated polymannuronate alginate more efficiently than non-deacetylated polyM. Is able to degrade its own alginate, but at a lower efficiency than that produced from M.pyriferia and P.aeruginosa. May serve to degrade mislocalized alginate that is trapped in the periplasmic space. This is Alginate lyase from Azotobacter chroococcum mcd 1.